Consider the following 402-residue polypeptide: Probable peptidoglycan glycosyltransferase FtsW (402 aa).

The Cytoplasmic portion of the chain corresponds to 1–24; that stretch reads MLYRLKLLLSGQNTKKERVRAKLE. A helical transmembrane segment spans residues 25–45; the sequence is IDISIVFVMLGLLIFGWVMVT. At 46–63 the chain is on the periplasmic side; sequence SASMVVALDDYNNPYFYS. The chain crosses the membrane as a helical span at residues 64 to 84; the sequence is IRQGFFAVIAIFLFLLALLVP. Over 85 to 91 the chain is Cytoplasmic; the sequence is TKNYEKN. Residues 92 to 112 form a helical membrane-spanning segment; it reads YNAFFFIMLIVLVAVLVPGVG. Topologically, residues 113-121 are periplasmic; that stretch reads KSVNGARRW. A helical membrane pass occupies residues 122–142; sequence IPLIIINIQVAELAKLLAIIF. At 143 to 160 the chain is on the cytoplasmic side; sequence FSGYIAENLPKMTNFKEG. Helical transmembrane passes span 161-181 and 182-202; these read ILTPITLLGCIAVLLLMQPDF and GSTVVISICVMGMLFVSGNKV. Residue Arg-203 is a topological domain, cytoplasmic. The helical transmembrane segment at 204-224 threads the bilayer; the sequence is WYGLLIGAMLIMATMLVIISP. Residues 225–284 are Periplasmic-facing; that stretch reads YRMHRITGFLHPWENANGSGYQLVQALIGFGRGGWFGDGLGNGVQKQFFLPEAHTDFITS. Residues 285–305 traverse the membrane as a helical segment; sequence VIAEEIGVIGLMILLMVYLFI. The Cytoplasmic segment spans residues 306–324; it reads VFRAMNIAKMAFELKRYYQ. The helical transmembrane segment at 325–345 threads the bilayer; the sequence is AFLSYGISFWIGFQVFVNIGV. Topologically, residues 346 to 357 are periplasmic; that stretch reads NTGLLPTKGLTL. Residues 358–378 form a helical membrane-spanning segment; the sequence is PLISYGGSSLLIMCFTLGILV. At 379 to 402 the chain is on the cytoplasmic side; the sequence is RVDFENKLLADTINPKYIYKKVRK.

It belongs to the SEDS family. FtsW subfamily.

The protein localises to the cell inner membrane. The catalysed reaction is [GlcNAc-(1-&gt;4)-Mur2Ac(oyl-L-Ala-gamma-D-Glu-L-Lys-D-Ala-D-Ala)](n)-di-trans,octa-cis-undecaprenyl diphosphate + beta-D-GlcNAc-(1-&gt;4)-Mur2Ac(oyl-L-Ala-gamma-D-Glu-L-Lys-D-Ala-D-Ala)-di-trans,octa-cis-undecaprenyl diphosphate = [GlcNAc-(1-&gt;4)-Mur2Ac(oyl-L-Ala-gamma-D-Glu-L-Lys-D-Ala-D-Ala)](n+1)-di-trans,octa-cis-undecaprenyl diphosphate + di-trans,octa-cis-undecaprenyl diphosphate + H(+). It functions in the pathway cell wall biogenesis; peptidoglycan biosynthesis. Its function is as follows. Peptidoglycan polymerase that is essential for cell division. The protein is Probable peptidoglycan glycosyltransferase FtsW of Francisella salina.